The primary structure comprises 313 residues: Malate dehydrogenase (313 aa).

NAD(+)-binding positions include Gly-11 to Gly-16 and Asp-35. Positions 86 and 92 each coordinate substrate. NAD(+) contacts are provided by residues Asn-99 and Ile-122–Asn-124. Asn-124 and Arg-155 together coordinate substrate. The Proton acceptor role is filled by His-179.

It belongs to the LDH/MDH superfamily. MDH type 3 family.

It carries out the reaction (S)-malate + NAD(+) = oxaloacetate + NADH + H(+). Catalyzes the reversible oxidation of malate to oxaloacetate. This chain is Malate dehydrogenase, found in Sorangium cellulosum (strain So ce56) (Polyangium cellulosum (strain So ce56)).